A 334-amino-acid chain; its full sequence is N-acetyl-gamma-glutamyl-phosphate reductase (334 aa).

Cys-154 is an active-site residue.

Belongs to the NAGSA dehydrogenase family. Type 1 subfamily.

The protein localises to the cytoplasm. It catalyses the reaction N-acetyl-L-glutamate 5-semialdehyde + phosphate + NADP(+) = N-acetyl-L-glutamyl 5-phosphate + NADPH + H(+). It functions in the pathway amino-acid biosynthesis; L-arginine biosynthesis; N(2)-acetyl-L-ornithine from L-glutamate: step 3/4. Catalyzes the NADPH-dependent reduction of N-acetyl-5-glutamyl phosphate to yield N-acetyl-L-glutamate 5-semialdehyde. This is N-acetyl-gamma-glutamyl-phosphate reductase from Aliivibrio fischeri (strain ATCC 700601 / ES114) (Vibrio fischeri).